Consider the following 134-residue polypeptide: Small ribosomal subunit protein uS8 (134 aa).

The protein belongs to the universal ribosomal protein uS8 family. In terms of assembly, part of the 30S ribosomal subunit. Contacts proteins S5 and S12.

One of the primary rRNA binding proteins, it binds directly to 16S rRNA central domain where it helps coordinate assembly of the platform of the 30S subunit. The chain is Small ribosomal subunit protein uS8 from Thermotoga maritima (strain ATCC 43589 / DSM 3109 / JCM 10099 / NBRC 100826 / MSB8).